The sequence spans 193 residues: Thioredoxin peroxidase (193 aa).

The Thioredoxin domain occupies 3 to 161 (AVVGKLAPSF…ALRLLDAFQF (159 aa)). The Cysteine sulfenic acid (-SOH) intermediate role is filled by Cys48.

Belongs to the peroxiredoxin family. AhpC/Prx1 subfamily. Homodimer; disulfide-linked, upon oxidation.

It carries out the reaction a hydroperoxide + [thioredoxin]-dithiol = an alcohol + [thioredoxin]-disulfide + H2O. Its function is as follows. Thiol-specific peroxidase that catalyzes the reduction of hydrogen peroxide and organic hydroperoxides to water and alcohols, respectively. Plays a role in cell protection against oxidative stress by detoxifying peroxides and as sensor of hydrogen peroxide-mediated signaling events. In Echinococcus granulosus (Hydatid tapeworm), this protein is Thioredoxin peroxidase (TPX).